A 253-amino-acid polypeptide reads, in one-letter code: Non-homologous end joining protein Ku (253 aa).

The 184-residue stretch at 9-192 (ISFGLVNIPV…EITEEELELA (184 aa)) folds into the Ku domain.

Belongs to the prokaryotic Ku family. As to quaternary structure, homodimer. Interacts with LigD.

Its function is as follows. With LigD forms a non-homologous end joining (NHEJ) DNA repair enzyme, which repairs dsDNA breaks with reduced fidelity. Binds linear dsDNA with 5'- and 3'- overhangs but not closed circular dsDNA nor ssDNA. Recruits and stimulates the ligase activity of LigD. This chain is Non-homologous end joining protein Ku, found in Archaeoglobus fulgidus (strain ATCC 49558 / DSM 4304 / JCM 9628 / NBRC 100126 / VC-16).